The following is a 107-amino-acid chain: Cytochrome b-c1 complex subunit 8 (107 aa).

Residues 1–8 (MRPTQTML) constitute a propeptide, plays a role in role in intramitochondrial sorting. Over 1-62 (MRPTQTMLGG…TAHDAVFNTF (62 aa)) the chain is Mitochondrial matrix. Residues 63 to 93 (RRVSSQFLYWAPSLVAGYYIMNWAIERNHYL) form a helical membrane-spanning segment. Over 94 to 107 (NSKAGRAEFAGQEE) the chain is Mitochondrial intermembrane.

This sequence belongs to the UQCRQ/QCR8 family. Component of the ubiquinol-cytochrome c oxidoreductase (cytochrome b-c1 complex, complex III, CIII), a multisubunit enzyme composed of 10 subunits. The complex is composed of 3 respiratory subunits cytochrome b (cob), cytochrome c1 (cyt-1) and Rieske protein (fes-1), 2 core protein subunits pep and ucr-1, and 5 low-molecular weight protein subunits qcr6, qcr7, qcr8, qcr9 and probably NCU16844/qcr10. The complex exists as an obligatory dimer and forms supercomplexes (SCs) in the inner mitochondrial membrane with NADH-ubiquinone oxidoreductase (complex I, CI) and cytochrome c oxidase (complex IV, CIV), resulting in different assemblies (supercomplexes SCI(1)III(2), SCIII(2)IV(1) and SCIII(2)IV(2) as well as higher order I(x)III(y)IV(z) megacomplexes).

It localises to the mitochondrion inner membrane. In terms of biological role, component of the ubiquinol-cytochrome c oxidoreductase, a multisubunit transmembrane complex that is part of the mitochondrial electron transport chain which drives oxidative phosphorylation. The respiratory chain contains 3 multisubunit complexes succinate dehydrogenase (complex II, CII), ubiquinol-cytochrome c oxidoreductase (cytochrome b-c1 complex, complex III, CIII) and cytochrome c oxidase (complex IV, CIV), that cooperate to transfer electrons derived from NADH and succinate to molecular oxygen, creating an electrochemical gradient over the inner membrane that drives transmembrane transport and the ATP synthase. The cytochrome b-c1 complex catalyzes electron transfer from ubiquinol to cytochrome c, linking this redox reaction to translocation of protons across the mitochondrial inner membrane, with protons being carried across the membrane as hydrogens on the quinol. In the process called Q cycle, 2 protons are consumed from the matrix, 4 protons are released into the intermembrane space and 2 electrons are passed to cytochrome c. In Neurospora crassa (strain ATCC 24698 / 74-OR23-1A / CBS 708.71 / DSM 1257 / FGSC 987), this protein is Cytochrome b-c1 complex subunit 8 (qcr8).